The chain runs to 507 residues: Peroxisomal catalase (507 aa).

Residues His-65 and Asn-138 contribute to the active site. Tyr-348 is a heme binding site. The short motif at Ser-505–Ile-507 is the Microbody targeting signal element.

Belongs to the catalase family. In terms of assembly, homotetramer. Requires heme as cofactor.

It is found in the peroxisome matrix. The catalysed reaction is 2 H2O2 = O2 + 2 H2O. Catalyzes the degradation of hydrogen peroxide (H(2)O(2)) generated by peroxisomal oxidases to water and oxygen, thereby protecting cells from the toxic effects of hydrogen peroxide. This is Peroxisomal catalase (PXP9) from Pichia angusta (Yeast).